Here is a 536-residue protein sequence, read N- to C-terminus: Pre-mRNA-splicing regulator female-lethal(2)D (536 aa).

The tract at residues methionine 1 to glutamine 91 is disordered. Over residues glutamine 28–serine 39 the composition is skewed to low complexity. Positions histidine 57–histidine 69 are enriched in basic residues. A compositionally biased stretch (low complexity) spans glutamine 72–glutamine 91. Positions lysine 254 to alanine 319 form a coiled coil. The tract at residues alanine 424–histidine 450 is disordered.

Belongs to the fl(2)d family. In terms of assembly, component of the WMM complex, a N6-methyltransferase complex composed of a catalytic subcomplex, named MAC, and of an associated subcomplex, named MACOM. The MAC subcomplex is composed of Ime4/Mettl3 and Mettl14. The MACOM subcomplex is composed of fl(2)d, Flacc/Xio, Hakai, vir, and, in some cases of nito. Interacts with vir and msk. Part of a complex containing fl(2)d, Sxl and vir.

It localises to the nucleus. Functionally, associated component of the WMM complex, a complex that mediates N6-methyladenosine (m6A) methylation of mRNAs, a modification that plays a role in the efficiency of mRNA splicing and is required for sex determination. Required for sex determination and dosage compensation via Sxl alternative splicing: m6A methylation acts as a key regulator of Sxl pre-mRNA and promotes female-specific alternative splicing of Sxl, which determines female physiognomy. M6A methylation is also required for neuronal functions. Required for proper inclusion of regulated exons in Ubx transcripts, leading to isoforms Ia/b and IIa/b. The chain is Pre-mRNA-splicing regulator female-lethal(2)D from Drosophila melanogaster (Fruit fly).